The chain runs to 316 residues: Ribosomal RNA small subunit methyltransferase H (316 aa).

S-adenosyl-L-methionine contacts are provided by residues 35–37 (GGH), Asp-55, Phe-79, Asp-101, and Gln-108.

It belongs to the methyltransferase superfamily. RsmH family.

The protein resides in the cytoplasm. The enzyme catalyses cytidine(1402) in 16S rRNA + S-adenosyl-L-methionine = N(4)-methylcytidine(1402) in 16S rRNA + S-adenosyl-L-homocysteine + H(+). Specifically methylates the N4 position of cytidine in position 1402 (C1402) of 16S rRNA. This chain is Ribosomal RNA small subunit methyltransferase H, found in Vibrio proteolyticus (Aeromonas proteolytica).